The following is a 618-amino-acid chain: Cationic amino acid transporter 3 (618 aa).

Residues 1–36 (MLWQALRRFGQKLVRRRVLELGMGETRLARCLSTLD) lie on the Cytoplasmic side of the membrane. The helical transmembrane segment at 37–57 (LVALGVGSTLGAGVYVLAGEV) threads the bilayer. Topologically, residues 58-61 (AKDK) are extracellular. A helical transmembrane segment spans residues 62–82 (AGPSIVICFLVAALSSVLAGL). The Cytoplasmic portion of the chain corresponds to 83–107 (CYAEFGARVPGSGSAYLYSYVTVGE). Residues 108 to 128 (LWAFTTGWNLILSYVIGTASV) form a helical membrane-spanning segment. At 129 to 162 (ARAWSSAFDNLIGNHISRTLKGTILLKMPHVLAE) the chain is on the extracellular side. The helical transmembrane segment at 163-183 (YPDFFALALVLLLTGLLVLGA) threads the bilayer. At 184–191 (SKSALVTK) the chain is on the cytoplasmic side. Residues 192–212 (VFTGMNLLVLSFVIISGFIKG) form a helical membrane-spanning segment. Residues 213–244 (ELRNWKLTKEDYCLTMSESNGTCSLDSMGSGG) are Extracellular-facing. Residue N232 is glycosylated (N-linked (GlcNAc...) asparagine). Residues 245-265 (FMPFGLEGILRGAATCFYAFV) form a helical membrane-spanning segment. Over 266–285 (GFDCIATTGEEAQNPQRSIP) the chain is Cytoplasmic. Residues 286–306 (MGIVISMFICFLAYFGVSSAL) traverse the membrane as a helical segment. Over 307-335 (TLMMPYYKLHPESPLPEAFSYVGWEPARY) the chain is Extracellular. A helical transmembrane segment spans residues 336–356 (LVAIGSLCALSTSLLGSMFPM). Residues 357–380 (PRVMYSMAEDGLLFRVLAKVHSVT) lie on the Cytoplasmic side of the membrane. Residues 381–401 (HIPIVATLVSGVIAAFMAFLF) form a helical membrane-spanning segment. Residues 402-406 (ELTDL) are Extracellular-facing. A helical membrane pass occupies residues 407–427 (VDLMSIGTLLAHSLVSICVLI). The Cytoplasmic segment spans residues 428–474 (LRYQPDQEMKSVEEEMELQEETLEAEKLTVQALFCPVNSIPTLLSGR). The helical transmembrane segment at 475–495 (VVYVCSSLLAVLLTVLCLVLT) threads the bilayer. At 496–506 (WWTTPLRSGDP) the chain is on the extracellular side. A helical membrane pass occupies residues 507 to 527 (VWVTVVVLILGLILAISGVIW). At 528-539 (RQPQNRTPLHFK) the chain is on the cytoplasmic side. The chain crosses the membrane as a helical span at residues 540–560 (VPAVPLLPLVSIFVNVYLMMQ). The Extracellular segment spans residues 561–568 (MTAGTWAR). The helical transmembrane segment at 569 to 589 (FGIWMLIGFAIYFGYGIQHSM) threads the bilayer. The Cytoplasmic portion of the chain corresponds to 590–618 (KEVKNHQTLPKTRAQTIDLDLTTSCVHSI). Residue T605 is modified to Phosphothreonine. S617 carries the phosphoserine modification.

It belongs to the amino acid-polyamine-organocation (APC) superfamily. Cationic amino acid transporter (CAT) (TC 2.A.3.3) family. In terms of processing, N-glycosylated. As to expression, expressed in adult brain and in a wide variety of embryonic tissues.

The protein localises to the cell membrane. The enzyme catalyses L-arginine(in) = L-arginine(out). It carries out the reaction L-lysine(in) = L-lysine(out). The catalysed reaction is L-ornithine(in) = L-ornithine(out). In terms of biological role, uniporter that mediates the uptake of cationic L-amino acids such as L-arginine, L-lysine and L-ornithine. The transport is sodium ions- and pH-independent, moderately trans-stimulated and is mediated by passive diffusion. This chain is Cationic amino acid transporter 3, found in Mus musculus (Mouse).